A 217-amino-acid chain; its full sequence is Ribonuclease HII (217 aa).

An RNase H type-2 domain is found at 27-216 (RTIAGIDEAG…VREHLGESRC (190 aa)). 3 residues coordinate a divalent metal cation: Asp33, Glu34, and Asp125.

It belongs to the RNase HII family. The cofactor is Mn(2+). Mg(2+) serves as cofactor.

Its subcellular location is the cytoplasm. It catalyses the reaction Endonucleolytic cleavage to 5'-phosphomonoester.. Its function is as follows. Endonuclease that specifically degrades the RNA of RNA-DNA hybrids. This chain is Ribonuclease HII, found in Geobacter sulfurreducens (strain ATCC 51573 / DSM 12127 / PCA).